Reading from the N-terminus, the 184-residue chain is MGEVKETKTNNSKENPEEEVPGVITTTTSAIHNFLKKTKAQDIINWGRKNSLWFMTQPMGCCGVEMIATGCAHYDTDRFGIIPRNSPRHADVMIISGYVTKKYLPALKRLWDQMPAPKWVIAMGDCAISGGPFYESYSTVQNIDEIFPIDVYIPGCPPRPEALIQGFVELQEKIKARKDRGTEY.

The disordered stretch occupies residues 1–20; the sequence is MGEVKETKTNNSKENPEEEV. [4Fe-4S] cluster is bound by residues C61, C62, C126, and C156.

Belongs to the complex I 20 kDa subunit family. As to quaternary structure, the FPO complex is composed of at least 13 different subunits. FAD serves as cofactor. Requires [4Fe-4S] cluster as cofactor.

The protein localises to the cell inner membrane. It catalyses the reaction methanophenazine + reduced coenzyme F420-(gamma-L-Glu)(n) = dihydromethanophenazine + oxidized coenzyme F420-(gamma-L-Glu)(n) + H(+). Functionally, component of the F(420)H(2) dehydrogenase (FPO complex) which is part of the energy-conserving F(420)H(2):heterodisulfide oxidoreductase system. The membrane-bound electron transfer system of the complex plays an important role in the metabolism of methylotrophic methanogens when the organisms grow on methanol or methylamines. Catalyzes the oxidation of methanophenazine to dihydromethanophenazine. It shuttles electrons from F(420)H(2), via FAD and iron-sulfur (Fe-S) centers, to methanophenazine (an electron carrier in the membrane). It couples the redox reaction to proton translocation (for every two electrons transferred, two hydrogen ions are translocated across the cytoplasmic membrane), and thus conserves the redox energy in a proton gradient. It also catalyzes the oxidation of F(420)H(2) with quinones such as 2,3-dimethyl-1,4-naphthoquinone, 2-methyl-1,4-naphthoquinone and tetramethyl-p-benzoquinone. The polypeptide is F(420)H(2) dehydrogenase subunit B (fpoB) (Methanosarcina mazei (strain ATCC BAA-159 / DSM 3647 / Goe1 / Go1 / JCM 11833 / OCM 88) (Methanosarcina frisia)).